Consider the following 593-residue polypeptide: AT-rich interactive domain-containing protein 3A (593 aa).

A disordered region spans residues 14-222; that stretch reads QQRARQELEA…PQLQPPDHGD (209 aa). Positions 41-53 are enriched in basic and acidic residues; that stretch reads AAPDEDREPESAR. The segment covering 54 to 87 has biased composition (low complexity); the sequence is MQRAQMAALAAMRAAAAGLGHPASPGGSEDGPPG. Residues S77, S81, and S88 each carry the phosphoserine modification. At T98 the chain carries Phosphothreonine. Phosphoserine is present on residues S101 and S119. The span at 104–127 shows a compositional bias: basic and acidic residues; the sequence is RGREGPGEEHFEDMASDEDMKPKW. Residues 119–156 are acidic; sequence SDEDMKPKWEEEEMEEDLGEDEEEEEEDYEDEEEEEDE. Acidic residues predominate over residues 128-158; the sequence is EEEEMEEDLGEDEEEEEEDYEDEEEEEDEEG. The ARID domain occupies 238–330; sequence DPKRKEFLDD…YLYPYECEKR (93 aa). 2 positions are modified to phosphoserine: S353 and S362. Residues K398, K399, K452, and K462 each participate in a glycyl lysine isopeptide (Lys-Gly) (interchain with G-Cter in SUMO2) cross-link. The REKLES domain maps to 444-541; the sequence is AALEQLREKL…GVLFAQPPAP (98 aa). Residues 445–488 are important for nuclear localization; sequence ALEQLREKLESAEPPEKKMALVADEQQRLMQRALQQNFLAMAAQ. Residues 490–513 form a homodimerization region; the sequence is PMSIRINSQASESRQDSAVNLTGT. Disordered stretches follow at residues 497–516 and 539–593; these read SQAS…TNGS and PAPT…NSLP. An important for cytoplasmic localization region spans residues 537 to 557; it reads QPPAPTPTSAPNKGGGGGGGS. The span at 549-576 shows a compositional bias: gly residues; sequence KGGGGGGGSSSNAGGRGGNTGTSGGQAG. Over residues 580-593 the composition is skewed to low complexity; sequence LSTPSTSTSNNSLP.

As to quaternary structure, homodimer. Heterodimer with ARID3B. Interacts with E2F1. Interacts with GTF2I and BTK. As to expression, widely expressed, with highest expression in skeletal muscle, thalamus, and colon.

The protein resides in the nucleus. It localises to the cytoplasm. Functionally, transcription factor which may be involved in the control of cell cycle progression by the RB1/E2F1 pathway and in B-cell differentiation. This Homo sapiens (Human) protein is AT-rich interactive domain-containing protein 3A (ARID3A).